A 358-amino-acid polypeptide reads, in one-letter code: Nuclear receptor subfamily 1 group I member 3 (358 aa).

A DNA-binding region (nuclear receptor) is located at residues 18–93 (PRNCVVCGDR…VGMRKDMILS (76 aa)). The segment at 21-41 (CVVCGDRATGYHFHALTCEGC) adopts an NR C4-type zinc-finger fold. At Thr-48 the chain carries Phosphothreonine; by PKC. The NR C4-type zinc-finger motif lies at 57–81 (CPFAGRCEVSKAQRRHCPACRLQKC). In terms of domain architecture, NR LBD spans 119–358 (QQKELVQILL…MTPLLGEICS (240 aa)).

Belongs to the nuclear hormone receptor family. NR1 subfamily. Heterodimer of NR1I3 and RXR. Interacts with PSMC4. Interacts with ECT2. Directly interacts with DNAJC7; this complex may also include HSP90. Interacts with CRY1. Interacts with CRY2 in a ligand-dependent manner. Post-translationally, phosphorylated at Thr-48 by PKC, dephosphorylation of Thr-48 is required for nuclear translocation and activation. As to expression, predominantly expressed in liver.

Its subcellular location is the nucleus. It is found in the cytoplasm. The protein localises to the cytoskeleton. Functionally, binds and transactivates the retinoic acid response elements that control expression of the retinoic acid receptor beta 2 and alcohol dehydrogenase 3 genes. Transactivates both the phenobarbital responsive element module of the human CYP2B6 gene and the CYP3A4 xenobiotic response element. This Mus musculus (Mouse) protein is Nuclear receptor subfamily 1 group I member 3 (Nr1i3).